A 471-amino-acid chain; its full sequence is Putative multidrug resistance protein MdtD (471 aa).

Over 1-11 the chain is Periplasmic; sequence MTDLPDNTRWQ. Residues 12 to 32 form a helical membrane-spanning segment; it reads LWIVAFGFFMQSLDTTIVNTA. Over 33–48 the chain is Cytoplasmic; sequence LPSMAQSLGESPLHMH. The chain crosses the membrane as a helical span at residues 49 to 69; the sequence is MVIVSYVLTVAVMLPASGWLA. The Periplasmic portion of the chain corresponds to 70–76; that stretch reads DKVGVRN. The helical transmembrane segment at 77 to 97 threads the bilayer; the sequence is IFFTAIVLFTLGSLFCALSGT. Residues 98 to 101 lie on the Cytoplasmic side of the membrane; sequence LNEL. Residues 102 to 124 traverse the membrane as a helical segment; it reads LLARALQGVGGAMMVPVGRLTVM. Residues 125-137 are Periplasmic-facing; that stretch reads KIVPREQYMAAMT. A helical transmembrane segment spans residues 138–158; the sequence is FVTLPGQVGPLLGPALGGLLV. Topologically, residues 159–164 are cytoplasmic; that stretch reads EYASWH. The helical transmembrane segment at 165–185 threads the bilayer; the sequence is WIFLINIPVGIIGAIATLMLM. Over 186–196 the chain is Periplasmic; the sequence is PNYTMQTRRFD. A helical membrane pass occupies residues 197–217; that stretch reads LSGFLLLAIGMAVLTLALDGS. The Cytoplasmic segment spans residues 218 to 224; sequence KGTGLSP. Residues 225–245 traverse the membrane as a helical segment; the sequence is LAITGLVAVGVVALVLYLLHA. The Periplasmic segment spans residues 246–262; the sequence is RNNNRALFSLKLFRTRT. The chain crosses the membrane as a helical span at residues 263–283; that stretch reads FSLGLAGSFAGRIGSGMLPFM. Over 284–285 the chain is Cytoplasmic; sequence TP. A helical transmembrane segment spans residues 286–306; sequence VFLQIGLGFSPFHAGLMMIPM. Over 307–341 the chain is Periplasmic; sequence VLGSMGMKRIVVQVVNRFGYRRVLVATTLGLSLVT. A helical transmembrane segment spans residues 342–362; sequence LLFMTTALLGWYYVLPFVLFL. Residues 363–395 are Cytoplasmic-facing; the sequence is QGMVNSTRFSSMNTLTLKDLPDNLASSGNSLLS. Residues 396 to 416 form a helical membrane-spanning segment; that stretch reads MIMQLSMSIGVTIAGLLLGLF. The Periplasmic segment spans residues 417 to 430; sequence GSQHVSVDSGTTQT. The helical transmembrane segment at 431 to 451 threads the bilayer; that stretch reads VFMYTWLSMAFIIALPAFIFA. Over 452-471 the chain is Cytoplasmic; it reads RVPNDTHQNVAISRRKRSAQ.

This sequence belongs to the major facilitator superfamily. TCR/Tet family.

Its subcellular location is the cell inner membrane. This is Putative multidrug resistance protein MdtD from Escherichia coli O17:K52:H18 (strain UMN026 / ExPEC).